Reading from the N-terminus, the 121-residue chain is Small ribosomal subunit protein uS13 (121 aa).

Positions 94-121 (GLPVRGQNTKNNARTRKGPRRTVANKKK) are disordered. Over residues 106–121 (ARTRKGPRRTVANKKK) the composition is skewed to basic residues.

Belongs to the universal ribosomal protein uS13 family. In terms of assembly, part of the 30S ribosomal subunit. Forms a loose heterodimer with protein S19. Forms two bridges to the 50S subunit in the 70S ribosome.

Its function is as follows. Located at the top of the head of the 30S subunit, it contacts several helices of the 16S rRNA. In the 70S ribosome it contacts the 23S rRNA (bridge B1a) and protein L5 of the 50S subunit (bridge B1b), connecting the 2 subunits; these bridges are implicated in subunit movement. Contacts the tRNAs in the A and P-sites. The polypeptide is Small ribosomal subunit protein uS13 (Geobacillus sp. (strain WCH70)).